The chain runs to 278 residues: E3 ubiquitin-protein ligase CHIP (278 aa).

3 TPR repeats span residues 10-43 (AERL…SPNV), 45-77 (AYWT…VHNS), and 78-111 (VKAH…GRCS). Positions 143 to 194 (ELNSLKETCEAALNQQRALDMSRTEESSDEAYTAHTERLKALERVFKKAAEE) form a coiled coil. A U-box domain is found at 199-273 (EVPDYLCCNI…AAYLEKHVWA (75 aa)).

As to quaternary structure, interacts with HSC70-4, PP2AA1, PP2AA3 and PP2A5, as well as with UBC8, UBC9 and UBC10. Also interacts with the chloroplastic proteolytic subunits ClpP4, FtsH1 and FtsH2.

It carries out the reaction S-ubiquitinyl-[E2 ubiquitin-conjugating enzyme]-L-cysteine + [acceptor protein]-L-lysine = [E2 ubiquitin-conjugating enzyme]-L-cysteine + N(6)-ubiquitinyl-[acceptor protein]-L-lysine.. Its pathway is protein modification; protein ubiquitination. Functionally, has E3 ubiquitin-protein ligase activity and may target misfolded substrates towards proteasomal degradation. Regulates the activity of some serine/threonine-protein phosphatases by E3 ubiquitin-protein ligase activity. Required for responses to biotic and abiotic stresses such as auxin, abscisic acid (ABA), low and high temperature and darkness, probably through the activation of serine/threonine-protein phosphatase and the subsequent modification of the plasma membrane composition. Regulates the chloroplastic Clp proteolytic activity in response to stresses. Ubiquitylates FtsH1, a component of the chloroplast FtsH protease, and affects protein degradation in chloroplasts. Mediates plastid precursor degradation to prevent cytosolic precursor accumulation, together with the molecular chaperone HSC70-4. Mediates ubiquitination of transit peptides and thereby led to their degradation through the ubiquitin-proteasome system. In Arabidopsis thaliana (Mouse-ear cress), this protein is E3 ubiquitin-protein ligase CHIP.